A 913-amino-acid polypeptide reads, in one-letter code: Proline and serine-rich protein 1 (913 aa).

Methionine 1 carries the post-translational modification N-acetylmethionine. Disordered stretches follow at residues 233–291, 488–507, 592–618, and 888–913; these read VPPP…PAVS, ASLS…ATNK, SEPT…TLGL, and DGFP…SGWQ. Residues 251 to 275 are compositionally biased toward polar residues; sequence LSSQSKPTQSQTFSTPASQLFSPHG. The span at 276 to 291 shows a compositional bias: low complexity; that stretch reads SSNPSTPAATPVPAVS. Over residues 488–506 the composition is skewed to polar residues; that stretch reads ASLSSLPNRNSDSPASATN. Residues 893 to 913 are compositionally biased toward polar residues; that stretch reads YPSTPGTPFSLQTGLSQSGWQ.

As to quaternary structure, interacts with TET2 and OGT; this interaction mediates TET2 O-GlcNAcylation and stability by promoting the interaction between OGT and TET2. Interacts with KDM6A. Interacts with TET1. Post-translationally, glycosylated. Interaction with OGT leads to GlcNAcylation.

Mediates OGT interaction with and O-GlcNAcylation of TET2 to control TET2 stabilization at enhancers and CpG islands (CGIs). The protein is Proline and serine-rich protein 1 of Mus musculus (Mouse).